Here is a 213-residue protein sequence, read N- to C-terminus: Small ribosomal subunit protein uS3 (213 aa).

Residues 38–106 form the KH type-2 domain; it reads IRSYIKKLLY…EFSLEVTEVR (69 aa).

This sequence belongs to the universal ribosomal protein uS3 family. Part of the 30S ribosomal subunit. Forms a tight complex with proteins S10 and S14.

Binds the lower part of the 30S subunit head. Binds mRNA in the 70S ribosome, positioning it for translation. The sequence is that of Small ribosomal subunit protein uS3 from Lawsonia intracellularis (strain PHE/MN1-00).